Consider the following 366-residue polypeptide: NADH-quinone oxidoreductase subunit D (366 aa).

Belongs to the complex I 49 kDa subunit family. As to quaternary structure, NDH-1 is composed of 14 different subunits. Subunits NuoB, C, D, E, F, and G constitute the peripheral sector of the complex.

It is found in the cell membrane. It catalyses the reaction a quinone + NADH + 5 H(+)(in) = a quinol + NAD(+) + 4 H(+)(out). In terms of biological role, NDH-1 shuttles electrons from NADH, via FMN and iron-sulfur (Fe-S) centers, to quinones in the respiratory chain. The immediate electron acceptor for the enzyme in this species is believed to be a menaquinone. Couples the redox reaction to proton translocation (for every two electrons transferred, four hydrogen ions are translocated across the cytoplasmic membrane), and thus conserves the redox energy in a proton gradient. In Bacillus cereus (strain ZK / E33L), this protein is NADH-quinone oxidoreductase subunit D.